The primary structure comprises 259 residues: Type III pantothenate kinase (259 aa).

Residue D6 to T13 coordinates ATP. Residue G107–R110 participates in substrate binding. D109 (proton acceptor) is an active-site residue. D129 serves as a coordination point for K(+). T132 contributes to the ATP binding site. T184 is a binding site for substrate.

The protein belongs to the type III pantothenate kinase family. Homodimer. NH4(+) serves as cofactor. K(+) is required as a cofactor.

Its subcellular location is the cytoplasm. It carries out the reaction (R)-pantothenate + ATP = (R)-4'-phosphopantothenate + ADP + H(+). It functions in the pathway cofactor biosynthesis; coenzyme A biosynthesis; CoA from (R)-pantothenate: step 1/5. In terms of biological role, catalyzes the phosphorylation of pantothenate (Pan), the first step in CoA biosynthesis. This chain is Type III pantothenate kinase, found in Listeria monocytogenes serovar 1/2a (strain ATCC BAA-679 / EGD-e).